The following is a 73-amino-acid chain: Translation initiation factor IF-1 (73 aa).

Residues 1 to 73 (MAKKDGVIEI…TRGRIVYRYK (73 aa)) form the S1-like domain.

This sequence belongs to the IF-1 family. Component of the 30S ribosomal translation pre-initiation complex which assembles on the 30S ribosome in the order IF-2 and IF-3, IF-1 and N-formylmethionyl-tRNA(fMet); mRNA recruitment can occur at any time during PIC assembly.

Its subcellular location is the cytoplasm. Functionally, one of the essential components for the initiation of protein synthesis. Stabilizes the binding of IF-2 and IF-3 on the 30S subunit to which N-formylmethionyl-tRNA(fMet) subsequently binds. Helps modulate mRNA selection, yielding the 30S pre-initiation complex (PIC). Upon addition of the 50S ribosomal subunit IF-1, IF-2 and IF-3 are released leaving the mature 70S translation initiation complex. The protein is Translation initiation factor IF-1 of Clavibacter michiganensis subsp. michiganensis (strain NCPPB 382).